The sequence spans 86 residues: Large ribosomal subunit protein bL27 (86 aa).

The protein belongs to the bacterial ribosomal protein bL27 family.

The protein is Large ribosomal subunit protein bL27 of Cupriavidus metallidurans (strain ATCC 43123 / DSM 2839 / NBRC 102507 / CH34) (Ralstonia metallidurans).